The sequence spans 213 residues: A-type ATP synthase subunit D (213 aa).

It belongs to the V-ATPase D subunit family. As to quaternary structure, has multiple subunits with at least A(3), B(3), C, D, E, F, H, I and proteolipid K(x).

The protein localises to the cell membrane. Component of the A-type ATP synthase that produces ATP from ADP in the presence of a proton gradient across the membrane. In Saccharolobus solfataricus (strain ATCC 35092 / DSM 1617 / JCM 11322 / P2) (Sulfolobus solfataricus), this protein is A-type ATP synthase subunit D.